We begin with the raw amino-acid sequence, 1850 residues long: Chitin synthase V (1850 aa).

Positions Met-1 to His-27 are disordered. Positions Met-1–Ala-779 constitute a Myosin motor domain. Gly-105–Ser-112 provides a ligand contact to ATP. N-linked (GlcNAc...) asparagine glycosylation is found at Asn-245, Asn-290, Asn-427, Asn-481, and Asn-558. Residues Asn-289–Ser-309 are disordered. The tract at residues Ser-593–Gly-647 is disordered. The span at Glu-620–His-630 shows a compositional bias: polar residues. Positions Leu-656–Asp-680 are actin-binding. A run of 2 helical transmembrane segments spans residues Trp-884–Gly-904 and Met-923–Ile-943. The 60-residue stretch at Gln-947–Phe-1006 folds into the Cytochrome b5 heme-binding domain. N-linked (GlcNAc...) asparagine glycans are attached at residues Asn-1033, Asn-1058, and Asn-1186. The helical transmembrane segment at Leu-1196–Leu-1216 threads the bilayer. Residues Asn-1453 and Asn-1559 are each glycosylated (N-linked (GlcNAc...) asparagine). 4 consecutive transmembrane segments (helical) span residues Leu-1568 to Ile-1588, Leu-1590 to Val-1610, Val-1617 to Ile-1637, and Met-1644 to Leu-1664. N-linked (GlcNAc...) asparagine glycosylation occurs at Asn-1767. The 51-residue stretch at Leu-1800–Lys-1850 folds into the DEK-C domain.

It in the N-terminal section; belongs to the TRAFAC class myosin-kinesin ATPase superfamily. Myosin family. This sequence in the C-terminal section; belongs to the chitin synthase family. Class V subfamily. In terms of tissue distribution, expressed in conidia and during appressorium formation.

The protein localises to the cell membrane. Its subcellular location is the cell septum. It is found in the cell tip. The enzyme catalyses [(1-&gt;4)-N-acetyl-beta-D-glucosaminyl](n) + UDP-N-acetyl-alpha-D-glucosamine = [(1-&gt;4)-N-acetyl-beta-D-glucosaminyl](n+1) + UDP + H(+). Its function is as follows. Polymerizes chitin, a structural polymer of the cell wall and septum, by transferring the sugar moiety of UDP-GlcNAc to the non-reducing end of the growing chitin polymer. Contributes to the production of conidia and the ability of fungal conidia to germinate. Involved in the fungal cell wall integrity and the ability of conidia to withstand biophysical pressure. Required for appressorium formation and evasion of insect cellular and/or humoral defenses, promoting the fungal dimorphic transition to the production of hyphal bodies that occurs within hosts, and ultimately to virulence. This chain is Chitin synthase V, found in Metarhizium acridum (strain CQMa 102).